The chain runs to 378 residues: UDP-4-amino-4-deoxy-L-arabinose--oxoglutarate aminotransferase (378 aa).

An N6-(pyridoxal phosphate)lysine modification is found at Lys-182.

It belongs to the DegT/DnrJ/EryC1 family. ArnB subfamily. As to quaternary structure, homodimer. It depends on pyridoxal 5'-phosphate as a cofactor.

The enzyme catalyses UDP-4-amino-4-deoxy-beta-L-arabinose + 2-oxoglutarate = UDP-beta-L-threo-pentopyranos-4-ulose + L-glutamate. It functions in the pathway nucleotide-sugar biosynthesis; UDP-4-deoxy-4-formamido-beta-L-arabinose biosynthesis; UDP-4-deoxy-4-formamido-beta-L-arabinose from UDP-alpha-D-glucuronate: step 2/3. It participates in bacterial outer membrane biogenesis; lipopolysaccharide biosynthesis. Functionally, catalyzes the conversion of UDP-4-keto-arabinose (UDP-Ara4O) to UDP-4-amino-4-deoxy-L-arabinose (UDP-L-Ara4N). The modified arabinose is attached to lipid A and is required for resistance to polymyxin and cationic antimicrobial peptides. This chain is UDP-4-amino-4-deoxy-L-arabinose--oxoglutarate aminotransferase, found in Aeromonas salmonicida (strain A449).